The primary structure comprises 186 residues: Thioredoxin M2, chloroplastic (186 aa).

Residues 1 to 72 constitute a chloroplast transit peptide; the sequence is MAAFTCTSRP…RVSRLRRAVV (72 aa). Positions 73–186 constitute a Thioredoxin domain; the sequence is CEAQETTTDI…LTSSLDKFLP (114 aa). Catalysis depends on nucleophile residues cysteine 110 and cysteine 113. Cysteine 110 and cysteine 113 are disulfide-bonded.

Belongs to the thioredoxin family. Plant M-type subfamily. Interacts with G6PD1 and G6PD4. Interacts with PGL3.

It localises to the plastid. Its subcellular location is the chloroplast stroma. In terms of biological role, thiol-disulfide oxidoreductase that may participate in various redox reactions. May activate NADP-malate dehydrogenase. The protein is Thioredoxin M2, chloroplastic of Arabidopsis thaliana (Mouse-ear cress).